The chain runs to 153 residues: Putative ATP synthase subunit f, mitochondrial (153 aa).

Belongs to the ATPase F chain family. Subunit of the F-type ATPase which has 2 components, CF(1) - the catalytic core - and CF(0) - the membrane proton channel.

Its subcellular location is the mitochondrion membrane. Its function is as follows. Mitochondrial membrane ATP synthase (F(1)F(0) ATP synthase or Complex V) produces ATP from ADP in the presence of a proton gradient across the membrane which is generated by electron transport complexes of the respiratory chain. F-type ATPases consist of two structural domains, F(1) - containing the extramembraneous catalytic core and F(0) - containing the membrane proton channel, linked together by a central stalk and a peripheral stalk. During catalysis, ATP synthesis in the catalytic domain of F(1) is coupled via a rotary mechanism of the central stalk subunits to proton translocation. Part of the complex F(0) domain. Minor subunit located with subunit a in the membrane. The chain is Putative ATP synthase subunit f, mitochondrial from Caenorhabditis elegans.